Consider the following 256-residue polypeptide: POU domain class 2-associating factor 1 (256 aa).

The disordered stretch occupies residues 1–23 (MLWQKPTAPEQAPAPPRPYQGVR). Residues 16–38 (PRPYQGVRVKEPVKELLRRKRGH) form the OCA domain.

It belongs to the POU2AF family. In terms of assembly, interacts with POU2F1/OCT1 and POU2F2/OCT2; the interaction increases POU2F1 and POU2F2 transactivation activity. In terms of processing, ubiquitinated; mediated by SIAH1 or SIAH2 and leading to its subsequent proteasomal degradation.

Its subcellular location is the nucleus. Functionally, transcriptional coactivator that specifically associates with either POU2F1/OCT1 or POU2F2/OCT2. It boosts the POU2F1/OCT1 mediated promoter activity and to a lesser extent, that of POU2F2/OCT2. It recognizes the POU domains of POU2F1/OCT1 and POU2F2/OCT2. It is essential for the response of B-cells to antigens and required for the formation of germinal centers. Regulates IL6 expression in B cells as POU2F2/OCT2 coactivator. The polypeptide is POU domain class 2-associating factor 1 (POU2AF1) (Bos taurus (Bovine)).